Here is a 129-residue protein sequence, read N- to C-terminus: Sulfurtransferase TusD (129 aa).

Residue Cys-79 is the Cysteine persulfide intermediate of the active site.

The protein belongs to the DsrE/TusD family. In terms of assembly, heterohexamer, formed by a dimer of trimers. The hexameric TusBCD complex contains 2 copies each of TusB, TusC and TusD. The TusBCD complex interacts with TusE.

Its subcellular location is the cytoplasm. In terms of biological role, part of a sulfur-relay system required for 2-thiolation of 5-methylaminomethyl-2-thiouridine (mnm(5)s(2)U) at tRNA wobble positions. Accepts sulfur from TusA and transfers it in turn to TusE. This chain is Sulfurtransferase TusD, found in Serratia proteamaculans (strain 568).